We begin with the raw amino-acid sequence, 479 residues long: Arf-GAP domain and FG repeat-containing protein 2 (479 aa).

Residues 27 to 153 (EVWCRRVREL…WYVPPEQVKG (127 aa)) enclose the Arf-GAP domain. Residues 47–70 (CFECAQRGVTYVDITVGSFVCTTC) form a C4-type zinc finger. Disordered regions lie at residues 150–223 (QVKG…TKKA) and 450–479 (LSQP…NPFL). Residues 157-167 (SKGSVSATPVQ) show a composition bias toward polar residues. Lys-174 carries the post-translational modification N6-acetyllysine. Low complexity predominate over residues 194-218 (SSQPGSQSQARSSSQARSSQPPSHS). The segment covering 454–479 (AGISTNPFMTGSSAFASKPPTTNPFL) has biased composition (polar residues).

Interacts with EPS15R.

This chain is Arf-GAP domain and FG repeat-containing protein 2 (Agfg2), found in Mus musculus (Mouse).